A 429-amino-acid polypeptide reads, in one-letter code: 3-isopropylmalate dehydratase large subunit (429 aa).

[4Fe-4S] cluster contacts are provided by cysteine 303, cysteine 363, and cysteine 366.

Belongs to the aconitase/IPM isomerase family. LeuC type 2 subfamily. In terms of assembly, heterodimer of LeuC and LeuD. The cofactor is [4Fe-4S] cluster.

The enzyme catalyses (2R,3S)-3-isopropylmalate = (2S)-2-isopropylmalate. Its pathway is amino-acid biosynthesis; L-leucine biosynthesis; L-leucine from 3-methyl-2-oxobutanoate: step 2/4. In terms of biological role, catalyzes the isomerization between 2-isopropylmalate and 3-isopropylmalate, via the formation of 2-isopropylmaleate. The polypeptide is 3-isopropylmalate dehydratase large subunit (Caldicellulosiruptor bescii (strain ATCC BAA-1888 / DSM 6725 / KCTC 15123 / Z-1320) (Anaerocellum thermophilum)).